We begin with the raw amino-acid sequence, 627 residues long: Protein fem-1 homolog B (627 aa).

ANK repeat units lie at residues 45 to 74 (QRST…VQTQ), 87 to 116 (DGAT…NVNH), 120 to 149 (TNST…NISI), 153 to 182 (YDNT…DPNA), 186 to 215 (CGAT…AMMV), and 218 to 248 (HGMT…NRRS). Residues 344 to 377 (SHPIIYRGAVYADNMEFEQCIKLWLHALHLRQKG) form a TPR repeat. ANK repeat units lie at residues 483–527 (DGST…DVNA) and 531–568 (EGNS…HTDM).

The protein belongs to the fem-1 family. In terms of assembly, component of a CRL2 E3 ubiquitin-protein ligase complex, also named ECS (Elongin BC-CUL2/5-SOCS-box protein) complex.

The protein resides in the cytoplasm. Its subcellular location is the nucleus. It participates in protein modification; protein ubiquitination. Its function is as follows. Substrate-recognition component of a Cul2-RING (CRL2) E3 ubiquitin-protein ligase complex of the DesCEND (destruction via C-end degrons) pathway, which recognizes a C-degron located at the extreme C terminus of target proteins, leading to their ubiquitination and degradation. The C-degron recognized by the DesCEND pathway is usually a motif of less than ten residues and can be present in full-length proteins, truncated proteins or proteolytically cleaved forms. The CRL2(FEM1B) complex specifically recognizes proteins ending with -Gly-Leu-Asp-Arg, leading to their ubiquitination and degradation. This chain is Protein fem-1 homolog B, found in Gallus gallus (Chicken).